A 180-amino-acid polypeptide reads, in one-letter code: p-cumate 2,3-dioxygenase system, small oxygenase component (180 aa).

It belongs to the bacterial ring-hydroxylating dioxygenase beta subunit family. As to quaternary structure, the p-cumate 2,3-dioxygenase multicomponent enzyme system is composed of an electron transfer component and a dioxygenase component (iron sulfur protein (ISP)). The electron transfer component is composed of a ferredoxin reductase (CmtAa) and a ferredoxin (CmtAd), and the dioxygenase component is formed of a large alpha subunit (CmtAb) and a small beta subunit (CmtAc).

It participates in aromatic compound metabolism; p-cumate degradation; acetaldehyde and pyruvate from p-cumate. Component of the p-cumate 2,3-dioxygenase multicomponent enzyme system which catalyzes the incorporation of both atoms of molecular oxygen into p-cumate to form cis-2,3-dihydroxy-2,3-dihydro-p-cumate. The beta subunit seems to have a structural role in the holoenzyme. Also able to catalyze the cis-dihydroxylation of indole-2-carboxylate and indole-3-carboxylate. This chain is p-cumate 2,3-dioxygenase system, small oxygenase component, found in Pseudomonas putida (Arthrobacter siderocapsulatus).